The chain runs to 172 residues: Envelope protein UL45 (172 aa).

At 1-27 (MPLRASEHAYRPLGPGTPPMRARLPAA) the chain is on the intravirion side. The chain crosses the membrane as a helical; Signal-anchor for type II membrane protein span at residues 28–48 (AWVGVGTIIGGVVIIAALVLV). Residues 49-172 (PSRASWALSP…TSTRNALGLP (124 aa)) lie on the Virion surface side of the membrane.

The protein belongs to the herpesviridae HHV-1 UL45 family.

The protein localises to the virion membrane. Important virulence factor of HSV neurotropism. Seems to be required for glycoprotein B-induced fusion. Dispensable for growth in vitro. In Human herpesvirus 1 (strain KOS) (HHV-1), this protein is Envelope protein UL45.